Reading from the N-terminus, the 519-residue chain is Sorting nexin-2 (519 aa).

Disordered regions lie at residues 1 to 20 (MAAE…DFEE) and 30 to 103 (STVS…VTPV). 2 stretches are compositionally biased toward low complexity: residues 30-44 (STVS…SPDP) and 93-103 (SSETSPAVTPV). Ser-97 carries the post-translational modification Phosphoserine. Phosphothreonine is present on residues Thr-101 and Thr-104. Phosphoserine occurs at positions 117 and 119. A PX domain is found at 140–269 (FDIEIGVSDP…QFLESSELPR (130 aa)). A 1,2-diacyl-sn-glycero-3-phospho-(1D-myo-inositol-3-phosphate)-binding residues include Arg-183, Ser-185, Lys-211, and Arg-235. Residue Ser-185 is modified to Phosphoserine. The segment at 260-519 (QFLESSELPR…AFLPEAKAIA (260 aa)) is interaction with RhoG. Residue Ser-277 is modified to Phosphoserine. Residues 278–295 (GAGILRMVNKAADAVNKM) are membrane-binding amphipathic helix. Residues 299 to 519 (MNESDAWFEE…AFLPEAKAIA (221 aa)) form the BAR domain. Lys-469 bears the N6-acetyllysine mark.

Belongs to the sorting nexin family. As to quaternary structure, predominantly forms heterodimers with BAR domain-containing sorting nexins SNX5, SNX6 and SNX32; can self-associate to form homodimers. The heterodimers are proposed to self-assemble into helical arrays on the membrane to stabilize and expand local membrane curvature underlying endosomal tubule formation. Thought to be a component of the originally described retromer complex (also called SNX-BAR retromer) which is a pentamer containing the heterotrimeric retromer cargo-selective complex (CSC), also decribed as vacuolar protein sorting subcomplex (VPS) and a heterodimeric membrane-deforming subcomplex formed between SNX1 or SNX2 and SNX5 or SNX6 (also called SNX-BAR subcomplex); the respective CSC and SNX-BAR subcomplexes associate with low affinity. Interacts with SNX5, SNX6, SNX32, VPS26A, VPS29, VPS35, FNBP1, KALRN, RHOG (GDP-bound form).

The protein localises to the early endosome membrane. The protein resides in the cell projection. It is found in the lamellipodium. In terms of biological role, involved in several stages of intracellular trafficking. Interacts with membranes containing phosphatidylinositol 3-phosphate (PtdIns(3P)) or phosphatidylinositol 3,5-bisphosphate (PtdIns(3,5)P2). Acts in part as component of the retromer membrane-deforming SNX-BAR subcomplex. The SNX-BAR retromer mediates retrograde transport of cargo proteins from endosomes to the trans-Golgi network (TGN) and is involved in endosome-to-plasma membrane transport for cargo protein recycling. The SNX-BAR subcomplex functions to deform the donor membrane into a tubular profile called endosome-to-TGN transport carrier (ETC). Can sense membrane curvature and has in vitro vesicle-to-membrane remodeling activity. Required for retrograde endosome-to-TGN transport of TGN38. Promotes KALRN- and RHOG-dependent but retromer-independent membrane remodeling such as lamellipodium formation; the function is dependent on GEF activity of KALRN. This Bos taurus (Bovine) protein is Sorting nexin-2 (SNX2).